The chain runs to 292 residues: uncharacterized protein (292 aa).

Residues Thr43 and Tyr105 each act as charge relay system in the active site. Residue Tyr131 is the Proton donor of the active site. The active-site Schiff-base intermediate with substrate is the Lys159.

The protein belongs to the DapA family. In terms of assembly, homotetramer.

The protein resides in the cytoplasm. This is an uncharacterized protein from Thermococcus kodakarensis (strain ATCC BAA-918 / JCM 12380 / KOD1) (Pyrococcus kodakaraensis (strain KOD1)).